Here is a 793-residue protein sequence, read N- to C-terminus: 3',5'-cyclic-nucleotide phosphodiesterase regA (793 aa).

The tract at residues 1 to 153 (MNNKQEEIDQ…SSHRVSDFSD (153 aa)) is disordered. Composition is skewed to low complexity over residues 13–34 (SSTSTSPSPSSSSSPSNNDSTS), 54–69 (NKNNNNNNNNNNSNNN), and 80–121 (NNSS…NNNN). Residues 161-280 (RILVADDDDV…LLKKKIDTVL (120 aa)) enclose the Response regulatory domain. Aspartate 212 carries the post-translational modification 4-aspartylphosphate. The region spanning 410-733 (RRNSIPTFPQ…ENWQAYMELQ (324 aa)) is the PDEase domain. The active-site Proton donor is the histidine 487. A divalent metal cation-binding residues include histidine 491, histidine 527, aspartate 528, and aspartate 639. The segment at 756–793 (KLPKIDEEENRDKVSSSSSSSTAPLTSTSSSNNETSSS) is disordered. The span at 770–793 (SSSSSSSTAPLTSTSSSNNETSSS) shows a compositional bias: low complexity.

This sequence belongs to the cyclic nucleotide phosphodiesterase family. A divalent metal cation is required as a cofactor. The phosphorelay mechanism involves the sequential transfer of a phosphate group from Asp-212 of pde2 to 'His-65' of rdeA. Phosphorylation of Asp-212 activates the phosphodiesterase domain.

It localises to the cytoplasm. Its subcellular location is the cytosol. The enzyme catalyses 3',5'-cyclic AMP + H2O = AMP + H(+). With respect to regulation, inhibited by 3-isobutyl-1-methylxanthine (IBMX). Functionally, phosphodiesterase specific for cAMP. Involved in the degradation of intracellular cAMP. Morphological suppressor of tagB. Phosphorelay protein that accepts phosphate from rdeA or supplies phosphate from regA; depending on the relative concentration of the phosphodonor proteins. This chain is 3',5'-cyclic-nucleotide phosphodiesterase regA (regA), found in Dictyostelium discoideum (Social amoeba).